The following is a 221-amino-acid chain: Penicillin-binding protein activator LpoB (221 aa).

Positions 1-20 are cleaved as a signal peptide; it reads MLNRMYRYALLATVALALSG. A lipid anchor (N-palmitoyl cysteine) is attached at Cys21. Residue Cys21 is the site of S-diacylglycerol cysteine attachment. The disordered stretch occupies residues 29–82; it reads PAPVEEAQPGTQQPTQPVPPPTQPVPTVPSVPSIPAQPGPIEHQPENATPEPKA. Pro residues predominate over residues 44-57; it reads QPVPPPTQPVPTVP.

Belongs to the LpoB family. In terms of assembly, interacts with PBP1b.

It localises to the cell outer membrane. Functionally, regulator of peptidoglycan synthesis that is essential for the function of penicillin-binding protein 1B (PBP1b). This chain is Penicillin-binding protein activator LpoB, found in Cronobacter turicensis (strain DSM 18703 / CCUG 55852 / LMG 23827 / z3032).